The primary structure comprises 360 residues: uncharacterized protein (360 aa).

This is an uncharacterized protein from Ostreid herpesvirus 1 (isolate France) (OsHV-1).